A 947-amino-acid chain; its full sequence is Bifunctional glutamine synthetase adenylyltransferase/adenylyl-removing enzyme (947 aa).

The interval 1–443 (MQLPSSLVSV…VFETLIGDDE (443 aa)) is adenylyl removase. Positions 451–947 (ARHFHELWDM…VKQAWNQWFA (497 aa)) are adenylyl transferase.

This sequence belongs to the GlnE family. Mg(2+) is required as a cofactor.

It carries out the reaction [glutamine synthetase]-O(4)-(5'-adenylyl)-L-tyrosine + phosphate = [glutamine synthetase]-L-tyrosine + ADP. The enzyme catalyses [glutamine synthetase]-L-tyrosine + ATP = [glutamine synthetase]-O(4)-(5'-adenylyl)-L-tyrosine + diphosphate. Involved in the regulation of glutamine synthetase GlnA, a key enzyme in the process to assimilate ammonia. When cellular nitrogen levels are high, the C-terminal adenylyl transferase (AT) inactivates GlnA by covalent transfer of an adenylyl group from ATP to specific tyrosine residue of GlnA, thus reducing its activity. Conversely, when nitrogen levels are low, the N-terminal adenylyl removase (AR) activates GlnA by removing the adenylyl group by phosphorolysis, increasing its activity. The regulatory region of GlnE binds the signal transduction protein PII (GlnB) which indicates the nitrogen status of the cell. In Vibrio parahaemolyticus serotype O3:K6 (strain RIMD 2210633), this protein is Bifunctional glutamine synthetase adenylyltransferase/adenylyl-removing enzyme.